Here is a 673-residue protein sequence, read N- to C-terminus: MLKLFSAFRKDKIWDFDGGIHPPEMKTQSNGTPLRQVPLAPRFVIPLKQHIGAEGELCVSVGDRVLRGQALTRGRGRMLPVHAPTSGTVIAIAPHSTAHPSALAELSVIIDADGEDRWIEREGWSDYRAHSREALIERIHQYGVAGLGGAGFPTGVKLQGGGDKITTLIINAAECEPYITADDRLMQDCAAQIVEGIRILAHILQPREVLIGIEDNKPQAISMLRAVLADAHDISLRVIPTKYPSGGAKQLTQILTGKQVPHGGRSSDIGVLMQNVGTAYAVKRAVVDGEPITERVVTLTGEAVSRPGNVWARLGTPVRHLLNDAGFCPSADQMVIMGGPLMGFTLPWLDVPVVKITNCLLAPSVTEMGAPQEEKSCIRCSACADACPADLLPQQLYWFSKGQQHDKATAHHIADCIECGACAWVCPSNIPLVQYFRQEKAEINAIRLEEKRAAEAKARFEARQARLEREKAARLARHKSAAVQPAAKDQDAIAAALARVKEKQAQATQPVVIQAGSLPDNSAVIEAREARKAQARAKQAAHPVADSAISGGAPRKAAVEAAIARAKARKQEQQAGSEPAEPVDPRKAAVEAAIARAKARKQEQQAGSEPAEPVDPRKAAVEAAIARAKARKQEQQAGSEPAEPADPRKAAVAAAIARVQAKKAAQQQVVNED.

4Fe-4S ferredoxin-type domains lie at Met-368–Tyr-397 and Lys-407–Phe-436. 8 residues coordinate [4Fe-4S] cluster: Cys-377, Cys-380, Cys-383, Cys-387, Cys-416, Cys-419, Cys-422, and Cys-426. Disordered regions lie at residues Gln-534 to Ala-553 and Ile-563 to Ala-653.

Belongs to the 4Fe4S bacterial-type ferredoxin family. RnfC subfamily. In terms of assembly, the complex is composed of six subunits: RsxA, RsxB, RsxC, RsxD, RsxE and RsxG. [4Fe-4S] cluster is required as a cofactor.

It localises to the cell inner membrane. In terms of biological role, part of a membrane-bound complex that couples electron transfer with translocation of ions across the membrane. Required to maintain the reduced state of SoxR. The polypeptide is Ion-translocating oxidoreductase complex subunit C (Salmonella gallinarum (strain 287/91 / NCTC 13346)).